The following is a 152-amino-acid chain: Probable ribose-5-phosphate isomerase B (152 aa).

10 to 11 lines the D-ribulose 5-phosphate pocket; sequence DH. Cys69 functions as the Proton acceptor in the catalytic mechanism. Position 70-74 (70-74) interacts with D-ribulose 5-phosphate; sequence GTGVG. The Proton donor role is filled by His102. Asp103, Arg113, Arg136, and Arg140 together coordinate D-ribulose 5-phosphate.

It belongs to the LacAB/RpiB family. Homodimer.

It carries out the reaction aldehydo-D-ribose 5-phosphate = D-ribulose 5-phosphate. It participates in carbohydrate degradation; pentose phosphate pathway; D-ribose 5-phosphate from D-ribulose 5-phosphate (non-oxidative stage): step 1/1. Its function is as follows. Catalyzes the interconversion of ribulose-5-P and ribose-5-P. The protein is Probable ribose-5-phosphate isomerase B of Mycoplasma genitalium (strain ATCC 33530 / DSM 19775 / NCTC 10195 / G37) (Mycoplasmoides genitalium).